Consider the following 74-residue polypeptide: High-potential iron-sulfur protein (74 aa).

[4Fe-4S] cluster is bound by residues cysteine 36, cysteine 39, cysteine 53, and cysteine 67.

The protein belongs to the high-potential iron-sulfur protein (HiPIP) family. As to quaternary structure, homodimer.

Its function is as follows. Specific class of high-redox-potential 4Fe-4S ferredoxins. Functions in anaerobic electron transport in most purple and in some other photosynthetic bacteria and in at least one genus (Paracoccus) of halophilic, denitrifying bacteria. In Rubrivivax gelatinosus (Rhodocyclus gelatinosus), this protein is High-potential iron-sulfur protein (hip).